A 660-amino-acid chain; its full sequence is Bifunctional polymyxin resistance protein ArnA (660 aa).

The segment at 1–304 is formyltransferase ArnAFT; that stretch reads MKTVVFAYHD…TLGLVQGSRL (304 aa). 86-88 provides a ligand contact to (6R)-10-formyltetrahydrofolate; that stretch reads HLI. The active-site Proton donor; for formyltransferase activity is the histidine 104. Residues arginine 114 and 136–140 each bind (6R)-10-formyltetrahydrofolate; that span reads VKRAD. The interval 314 to 660 is dehydrogenase ArnADH; the sequence is RRTRVLILGV…RTVDLTDKPS (347 aa). Residues aspartate 347 and 368–369 each bind NAD(+); that span reads DI. Residues alanine 393, tyrosine 398, and 432-433 each bind UDP-alpha-D-glucuronate; that span reads TS. Glutamate 434 (proton acceptor; for decarboxylase activity) is an active-site residue. UDP-alpha-D-glucuronate-binding positions include arginine 460, asparagine 492, 526-535, and tyrosine 613; that span reads KLIDGGKQKR. The active-site Proton donor; for decarboxylase activity is the arginine 619.

The protein in the N-terminal section; belongs to the Fmt family. UDP-L-Ara4N formyltransferase subfamily. This sequence in the C-terminal section; belongs to the NAD(P)-dependent epimerase/dehydratase family. UDP-glucuronic acid decarboxylase subfamily. Homohexamer, formed by a dimer of trimers.

It carries out the reaction UDP-alpha-D-glucuronate + NAD(+) = UDP-beta-L-threo-pentopyranos-4-ulose + CO2 + NADH. The catalysed reaction is UDP-4-amino-4-deoxy-beta-L-arabinose + (6R)-10-formyltetrahydrofolate = UDP-4-deoxy-4-formamido-beta-L-arabinose + (6S)-5,6,7,8-tetrahydrofolate + H(+). Its pathway is nucleotide-sugar biosynthesis; UDP-4-deoxy-4-formamido-beta-L-arabinose biosynthesis; UDP-4-deoxy-4-formamido-beta-L-arabinose from UDP-alpha-D-glucuronate: step 1/3. The protein operates within nucleotide-sugar biosynthesis; UDP-4-deoxy-4-formamido-beta-L-arabinose biosynthesis; UDP-4-deoxy-4-formamido-beta-L-arabinose from UDP-alpha-D-glucuronate: step 3/3. It participates in bacterial outer membrane biogenesis; lipopolysaccharide biosynthesis. In terms of biological role, bifunctional enzyme that catalyzes the oxidative decarboxylation of UDP-glucuronic acid (UDP-GlcUA) to UDP-4-keto-arabinose (UDP-Ara4O) and the addition of a formyl group to UDP-4-amino-4-deoxy-L-arabinose (UDP-L-Ara4N) to form UDP-L-4-formamido-arabinose (UDP-L-Ara4FN). The modified arabinose is attached to lipid A and is required for resistance to polymyxin and cationic antimicrobial peptides. The polypeptide is Bifunctional polymyxin resistance protein ArnA (Escherichia coli (strain SE11)).